The sequence spans 256 residues: Probable hydroxyacylglutathione hydrolase SPCC13B11.03c (256 aa).

Residues H63, H65, D67, H68, H118, and D139 each contribute to the Zn(2+) site. Residues 148-150 (RFF), 178-180 (HEY), and 250-253 (RTLK) contribute to the substrate site. H178 lines the Zn(2+) pocket.

The protein belongs to the metallo-beta-lactamase superfamily. Glyoxalase II family. Zn(2+) is required as a cofactor.

It localises to the cytoplasm. The protein resides in the nucleus. The catalysed reaction is an S-(2-hydroxyacyl)glutathione + H2O = a 2-hydroxy carboxylate + glutathione + H(+). It carries out the reaction (R)-S-lactoylglutathione + H2O = (R)-lactate + glutathione + H(+). The protein operates within secondary metabolite metabolism; methylglyoxal degradation; (R)-lactate from methylglyoxal: step 2/2. Its function is as follows. Thiolesterase that catalyzes the hydrolysis of S-D-lactoylglutathione to form glutathione and D-lactic acid. Involved in the metabolism of methylglyoxal, a toxic compound for yeast proliferation, by converting methylglyoxal to lactate via S-D-lactoylglutathione by sequential enzyme reactions catalyzed by glyoxalase I and glyoxalase II. This Schizosaccharomyces pombe (strain 972 / ATCC 24843) (Fission yeast) protein is Probable hydroxyacylglutathione hydrolase SPCC13B11.03c.